The primary structure comprises 160 residues: MFRGNFETSIDAKGRTSLPAKFREVLVDSFGDERFFMTNSNPVRLGDGGYSSGLVIYPYNEWLALEEKLKVGTGLGLSSAELASVKRRIVAPAVECVADKLGRILVPPHLRKSACLEREILFVGMLNKAEIWSQAEWEKVFRQDIENFPIDSPVLAELGL.

SpoVT-AbrB domains are found at residues 5–50 (NFET…DGGY) and 93–136 (AVEC…SQAE).

It belongs to the MraZ family. As to quaternary structure, forms oligomers.

The protein resides in the cytoplasm. It localises to the nucleoid. This Geotalea daltonii (strain DSM 22248 / JCM 15807 / FRC-32) (Geobacter daltonii) protein is Transcriptional regulator MraZ.